The following is a 594-amino-acid chain: Capsid vertex component 1 (594 aa).

Disordered stretches follow at residues 52 to 77 (GRST…DAVG), 176 to 205 (NKRD…NGSD), 443 to 468 (ARRQ…SGPP), and 575 to 594 (GRQE…FDDL). The span at 61 to 76 (GDEDDAPASDDAEDAV) shows a compositional bias: acidic residues.

It belongs to the herpesviridae CVC1 protein family. In terms of assembly, interacts (via C-terminus) with capsid vertex component 2/CVC2.

The protein resides in the virion. The protein localises to the host nucleus. Its function is as follows. Capsid vertex-specific component that plays a role during viral DNA encapsidation, assuring correct genome cleavage and presumably stabilizing capsids that contain full-length viral genomes. This is Capsid vertex component 1 from Homo sapiens (Human).